A 450-amino-acid chain; its full sequence is Phosphoglucosamine mutase (450 aa).

S102 serves as the catalytic Phosphoserine intermediate. The Mg(2+) site is built by S102, D243, D245, and D247. Phosphoserine is present on S102.

The protein belongs to the phosphohexose mutase family. Mg(2+) is required as a cofactor. Activated by phosphorylation.

The catalysed reaction is alpha-D-glucosamine 1-phosphate = D-glucosamine 6-phosphate. Catalyzes the conversion of glucosamine-6-phosphate to glucosamine-1-phosphate. This chain is Phosphoglucosamine mutase, found in Rhizobium rhizogenes (strain K84 / ATCC BAA-868) (Agrobacterium radiobacter).